A 184-amino-acid polypeptide reads, in one-letter code: GTP cyclohydrolase 1 (184 aa).

The Zn(2+) site is built by Cys-75, His-78, and Cys-146.

This sequence belongs to the GTP cyclohydrolase I family. In terms of assembly, homomer.

The enzyme catalyses GTP + H2O = 7,8-dihydroneopterin 3'-triphosphate + formate + H(+). The protein operates within cofactor biosynthesis; 7,8-dihydroneopterin triphosphate biosynthesis; 7,8-dihydroneopterin triphosphate from GTP: step 1/1. The protein is GTP cyclohydrolase 1 of Streptococcus pneumoniae (strain ATCC 700669 / Spain 23F-1).